A 217-amino-acid polypeptide reads, in one-letter code: MOB kinase activator-like 2 (217 aa).

The interval 15-38 is disordered; sequence GKESIRGNYKPKKHPRGSSRHTMR. The segment covering 23 to 38 has biased composition (basic residues); the sequence is YKPKKHPRGSSRHTMR. Zn(2+) is bound by residues cysteine 89, cysteine 94, histidine 167, and histidine 172.

Belongs to the MOB1/phocein family.

The polypeptide is MOB kinase activator-like 2 (mob2) (Dictyostelium discoideum (Social amoeba)).